Here is a 251-residue protein sequence, read N- to C-terminus: Small ribosomal subunit protein uS2 (251 aa).

Belongs to the universal ribosomal protein uS2 family.

This chain is Small ribosomal subunit protein uS2, found in Cereibacter sphaeroides (strain ATCC 17029 / ATH 2.4.9) (Rhodobacter sphaeroides).